Here is a 528-residue protein sequence, read N- to C-terminus: Berberine bridge enzyme-like 17 (528 aa).

The signal sequence occupies residues 1–19; it reads MKEVVYVLLLVLLVSVSDA. Residues Asn-20, Asn-35, Asn-52, and Asn-72 are each glycosylated (N-linked (GlcNAc...) asparagine). An intrachain disulfide couples Cys-32 to Cys-94. An FAD-binding PCMH-type domain is found at 69–246; sequence LNPNDTKLIA…LSWKINLVDV (178 aa). Residues 109 to 171 constitute a cross-link (6-(S-cysteinyl)-8alpha-(pros-histidyl)-FAD (His-Cys)); it reads HDYEGLSFTS…KTLAFAGGVC (63 aa). N-linked (GlcNAc...) asparagine glycosylation is found at Asn-256, Asn-340, and Asn-439.

It belongs to the oxygen-dependent FAD-linked oxidoreductase family. It depends on FAD as a cofactor. In terms of processing, the FAD cofactor is bound via a bicovalent 6-S-cysteinyl, 8alpha-N1-histidyl FAD linkage.

Its subcellular location is the secreted. The protein resides in the cell wall. In Arabidopsis thaliana (Mouse-ear cress), this protein is Berberine bridge enzyme-like 17.